The primary structure comprises 454 residues: F-box/WD repeat-containing protein 2 (454 aa).

The F-box domain occupies 54-101; that stretch reads RDFLKLLPLELSFYLLKWLDPQTLLTCCLVSKQWNKVISACTEVWQTA. WD repeat units lie at residues 139-175, 179-213, 217-255, 259-306, 313-352, 364-403, and 410-452; these read FETS…LWDV, QCVY…CWEW, ARTQ…VWAL, TCLN…IWPI, KCLK…QWDF, PEIA…RWPL, and KRGS…LWKE. Lysine 298 carries the N6-acetyllysine modification.

Directly interacts with SKP1 and CUL1.

Substrate-recognition component of the SCF (SKP1-CUL1-F-box protein)-type E3 ubiquitin ligase complex. This chain is F-box/WD repeat-containing protein 2 (FBXW2), found in Homo sapiens (Human).